The sequence spans 336 residues: tRNA N6-adenosine threonylcarbamoyltransferase (336 aa).

Fe cation is bound by residues His114 and His118. Substrate-binding positions include 136–140, Asp169, Gly182, Asp186, and Asn275; that span reads LVSGG. Asp301 contributes to the Fe cation binding site.

This sequence belongs to the KAE1 / TsaD family. Fe(2+) is required as a cofactor.

The protein resides in the cytoplasm. The catalysed reaction is L-threonylcarbamoyladenylate + adenosine(37) in tRNA = N(6)-L-threonylcarbamoyladenosine(37) in tRNA + AMP + H(+). Functionally, required for the formation of a threonylcarbamoyl group on adenosine at position 37 (t(6)A37) in tRNAs that read codons beginning with adenine. Is involved in the transfer of the threonylcarbamoyl moiety of threonylcarbamoyl-AMP (TC-AMP) to the N6 group of A37, together with TsaE and TsaB. TsaD likely plays a direct catalytic role in this reaction. The polypeptide is tRNA N6-adenosine threonylcarbamoyltransferase (Streptococcus pneumoniae serotype 4 (strain ATCC BAA-334 / TIGR4)).